Here is a 609-residue protein sequence, read N- to C-terminus: Alpha-fetoprotein (609 aa).

The first 18 residues, 1 to 18, serve as a signal peptide directing secretion; that stretch reads MKWVVSILLIFLLNSTES. Albumin domains lie at 19–210, 211–402, and 403–601; these read RTMH…ATIT, KELR…EELQ, and KYIQ…QLIS. His-22 provides a ligand contact to Cu(2+). Disulfide bonds link Cys-99–Cys-114, Cys-113–Cys-124, Cys-148–Cys-193, Cys-192–Cys-201, Cys-224–Cys-270, Cys-269–Cys-277, Cys-289–Cys-303, and Cys-302–Cys-313. Phosphoserine occurs at positions 111 and 115. The N-linked (GlcNAc...) asparagine glycan is linked to Asn-251. Ser-344 is subject to Phosphoserine. 7 disulfides stabilise this stretch: Cys-384/Cys-393, Cys-416/Cys-462, Cys-461/Cys-472, Cys-485/Cys-501, Cys-500/Cys-511, Cys-538/Cys-583, and Cys-582/Cys-591.

The protein belongs to the ALB/AFP/VDB family. As to quaternary structure, dimeric and trimeric forms have been found in addition to the monomeric form. Post-translationally, sulfated. In terms of tissue distribution, plasma.

The protein resides in the secreted. In terms of biological role, binds copper, nickel, and fatty acids as well as, and bilirubin less well than, serum albumin. This is Alpha-fetoprotein (AFP) from Equus caballus (Horse).